A 35-amino-acid polypeptide reads, in one-letter code: Water stress-responsive protein 7 (35 aa).

This is Water stress-responsive protein 7 from Pinus pinaster (Maritime pine).